A 355-amino-acid chain; its full sequence is Sorbitol dehydrogenase (355 aa).

Ala-2 is subject to N-acetylalanine. Cys-43 lines the Zn(2+) pocket. Tyr-49 is a substrate binding site. Zn(2+) contacts are provided by His-68 and Glu-69. A substrate-binding site is contributed by Glu-154. NAD(+) contacts are provided by residues Ile-182, Asp-202, Arg-207, 271–273, and 295–297; these read VGL and IFR. Residues Arg-297 and Tyr-298 each coordinate substrate.

Belongs to the zinc-containing alcohol dehydrogenase family. In terms of assembly, homotetramer. Zn(2+) serves as cofactor. As to expression, expressed in liver.

It is found in the mitochondrion membrane. The protein localises to the cell projection. It localises to the cilium. Its subcellular location is the flagellum. The enzyme catalyses keto-D-fructose + NADH + H(+) = D-sorbitol + NAD(+). Its function is as follows. Polyol dehydrogenase that catalyzes the reversible NAD(+)-dependent oxidation of various sugar alcohols. Is active with D-sorbitol (D-glucitol) as substrate, leading to the C2-oxidized product D-fructose. Is a key enzyme in the polyol pathway that interconverts glucose and fructose via sorbitol, which constitutes an important alternate route for glucose metabolism. This is Sorbitol dehydrogenase (SORD) from Gallus gallus (Chicken).